The following is a 377-amino-acid chain: 3-dehydroquinate synthase (377 aa).

Residues 115–119 (GVIGD), 139–140 (TS), lysine 152, and lysine 162 each bind NAD(+). The Zn(2+) site is built by glutamate 195, histidine 257, and histidine 276.

The protein belongs to the sugar phosphate cyclases superfamily. Dehydroquinate synthase family. Co(2+) serves as cofactor. Zn(2+) is required as a cofactor. Requires NAD(+) as cofactor.

It localises to the cytoplasm. It carries out the reaction 7-phospho-2-dehydro-3-deoxy-D-arabino-heptonate = 3-dehydroquinate + phosphate. The protein operates within metabolic intermediate biosynthesis; chorismate biosynthesis; chorismate from D-erythrose 4-phosphate and phosphoenolpyruvate: step 2/7. In terms of biological role, catalyzes the conversion of 3-deoxy-D-arabino-heptulosonate 7-phosphate (DAHP) to dehydroquinate (DHQ). This chain is 3-dehydroquinate synthase, found in Rhizobium etli (strain ATCC 51251 / DSM 11541 / JCM 21823 / NBRC 15573 / CFN 42).